A 194-amino-acid polypeptide reads, in one-letter code: MRARVLVGMLTMVGFAMGKAPVARVRTCHLCLLEDPSLGCISGSEKCTISLPSPCMVITIYKNTTVRFHVRGCGQHHSYRCQERHVIYQSDYLYKADCCQYDYCNSWSSAQHQSTLRGSPGSHLGMPLSASQIKQFYQALNLSLPQPGFHAHKVSEGLESLILPPELGLSIADLRQIYLFLNSSGLLVLPWDRP.

The N-terminal stretch at 1–18 is a signal peptide; that stretch reads MRARVLVGMLTMVGFAMG. The UPAR/Ly6 domain maps to 26–118; it reads RTCHLCLLED…SAQHQSTLRG (93 aa). Cystine bridges form between cysteine 28/cysteine 55, cysteine 31/cysteine 40, cysteine 47/cysteine 73, cysteine 81/cysteine 98, and cysteine 99/cysteine 104. An N-linked (GlcNAc...) asparagine glycan is attached at asparagine 63. Asparagine 141 carries N-linked (GlcNAc...) asparagine glycosylation.

Monomer. Post-translationally, N-glycosylated.

The protein resides in the secreted. In Mus musculus (Mouse), this protein is Lymphocyte antigen 6 complex locus protein G5b (Ly6g5b).